Here is a 455-residue protein sequence, read N- to C-terminus: Ammonium transporter Rh type B (455 aa).

Topologically, residues 1–13 (MAWSPRHSAGRRL) are cytoplasmic. A helical transmembrane segment spans residues 14–34 (QLPLLCLLLQGATAILFAVFV). At 35-61 (RYNRETDAALWHWGNHSNADNEFYFRY) the chain is on the extracellular side. N-linked (GlcNAc...) asparagine glycosylation is present at N49. The chain crosses the membrane as a helical span at residues 62-82 (PSFQDVHAMIFVGFGFLMVFL). At 83 to 86 (QRYG) the chain is on the cytoplasmic side. A helical membrane pass occupies residues 87–107 (FGSVGFTFLLAAFALQWSTLI). Residues 108 to 124 (QGFFHSFRGGYILVGME) are Extracellular-facing. The helical transmembrane segment at 125 to 145 (SMINADFCAGAVLISFGAVLG) threads the bilayer. At 146-151 (KTGPVQ) the chain is on the cytoplasmic side. The chain crosses the membrane as a helical span at residues 152–172 (LLLMALLEVVLFGLNEFVLLS). The Extracellular segment spans residues 173–179 (LLEVKDA). The chain crosses the membrane as a helical span at residues 180–200 (GGSMTIHTFGAYFGLILSRVL). Residues 201–219 (YRPQLEKSKHRQGSVYHSD) are Cytoplasmic-facing. Residues 220–240 (LFAMIGTIFLWIFWPSFNSAP) traverse the membrane as a helical segment. Residues 241 to 253 (TALGDGQHRTALN) lie on the Extracellular side of the membrane. Residues 254 to 274 (TYYSLTASTLSTFALSALVGG) traverse the membrane as a helical segment. Over 275 to 277 (DGR) the chain is Cytoplasmic. Residues 278 to 298 (LDMVHVQNAALAGGVVVGTSA) traverse the membrane as a helical segment. A topological domain (extracellular) is located at residue E299. A helical membrane pass occupies residues 300–320 (MMLTPFGALAAGFLAGAISTL). Residues 321–343 (GYKFVTPILESKLKVQDTCGVHN) are Cytoplasmic-facing. Residues 344–364 (LHGMPGVLGALLGGLVAGLAT) form a helical membrane-spanning segment. Residues 365 to 393 (REAYGDGLESVFPLIAEGQRSATSQAMHQ) are Extracellular-facing. Residues 394 to 414 (LFGLFVTLTFASVGGGLGGLL) traverse the membrane as a helical segment. The Cytoplasmic portion of the chain corresponds to 415 to 455 (LRLPILDSPPDSQCYEDQIYWEVPGEHEHLAQGSEETETQA). Residues 416–424 (RLPILDSPP) form an interaction with ANK3 region. The short motif at 429–432 (YEDQ) is the Basolateral sorting signal element.

It belongs to the ammonium transporter (TC 2.A.49) family. Rh subfamily. In terms of assembly, interacts (via C-terminus) with ANK2 and ANK3; required for targeting to the basolateral membrane. In terms of processing, N-glycosylated.

It is found in the cell membrane. The protein resides in the basolateral cell membrane. It carries out the reaction NH4(+)(in) = NH4(+)(out). The enzyme catalyses methylamine(out) = methylamine(in). The catalysed reaction is CO2(out) = CO2(in). Its function is as follows. Ammonium transporter involved in the maintenance of acid-base homeostasis. Transports ammonium and its related derivative methylammonium across the basolateral plasma membrane of epithelial cells likely contributing to renal transepithelial ammonia transport and ammonia metabolism. May transport either NH4(+) or NH3 ammonia species predominantly mediating an electrogenic NH4(+) transport. May act as a CO2 channel providing for renal acid secretion. The protein is Ammonium transporter Rh type B (RHBG) of Bos taurus (Bovine).